A 456-amino-acid chain; its full sequence is Bifunctional protein GlmU (456 aa).

The pyrophosphorylase stretch occupies residues 1 to 228 (MSARLAAIVL…PQEIFGINDR (228 aa)). Residues 10 to 13 (LAAG), lysine 24, glutamine 75, and 80 to 81 (GT) contribute to the UDP-N-acetyl-alpha-D-glucosamine site. A Mg(2+)-binding site is contributed by aspartate 105. 4 residues coordinate UDP-N-acetyl-alpha-D-glucosamine: glycine 142, glutamate 157, asparagine 172, and asparagine 226. Asparagine 226 is a Mg(2+) binding site. Residues 229 to 249 (LQLSQASRILNERTLVGLMLS) form a linker region. Residues 250-456 (GVTIVDPLRV…KAPYERTEDG (207 aa)) are N-acetyltransferase. UDP-N-acetyl-alpha-D-glucosamine is bound by residues arginine 331 and lysine 349. Histidine 361 acts as the Proton acceptor in catalysis. UDP-N-acetyl-alpha-D-glucosamine-binding residues include tyrosine 364 and asparagine 375. Residues alanine 378, 384 to 385 (NY), alanine 421, and arginine 437 each bind acetyl-CoA.

This sequence in the N-terminal section; belongs to the N-acetylglucosamine-1-phosphate uridyltransferase family. The protein in the C-terminal section; belongs to the transferase hexapeptide repeat family. Homotrimer. The cofactor is Mg(2+).

It is found in the cytoplasm. The enzyme catalyses alpha-D-glucosamine 1-phosphate + acetyl-CoA = N-acetyl-alpha-D-glucosamine 1-phosphate + CoA + H(+). The catalysed reaction is N-acetyl-alpha-D-glucosamine 1-phosphate + UTP + H(+) = UDP-N-acetyl-alpha-D-glucosamine + diphosphate. It functions in the pathway nucleotide-sugar biosynthesis; UDP-N-acetyl-alpha-D-glucosamine biosynthesis; N-acetyl-alpha-D-glucosamine 1-phosphate from alpha-D-glucosamine 6-phosphate (route II): step 2/2. Its pathway is nucleotide-sugar biosynthesis; UDP-N-acetyl-alpha-D-glucosamine biosynthesis; UDP-N-acetyl-alpha-D-glucosamine from N-acetyl-alpha-D-glucosamine 1-phosphate: step 1/1. The protein operates within bacterial outer membrane biogenesis; LPS lipid A biosynthesis. Functionally, catalyzes the last two sequential reactions in the de novo biosynthetic pathway for UDP-N-acetylglucosamine (UDP-GlcNAc). The C-terminal domain catalyzes the transfer of acetyl group from acetyl coenzyme A to glucosamine-1-phosphate (GlcN-1-P) to produce N-acetylglucosamine-1-phosphate (GlcNAc-1-P), which is converted into UDP-GlcNAc by the transfer of uridine 5-monophosphate (from uridine 5-triphosphate), a reaction catalyzed by the N-terminal domain. The sequence is that of Bifunctional protein GlmU from Gloeobacter violaceus (strain ATCC 29082 / PCC 7421).